The sequence spans 433 residues: Pyroglutamylated RF-amide peptide receptor (433 aa).

The Extracellular portion of the chain corresponds to 1–46 (MQALNITAEQFSRLLSAHNLTREQFIHRYGLRPLVYTPELPARAKL). N-linked (GlcNAc...) asparagine glycans are attached at residues asparagine 5 and asparagine 19. Residues 47-67 (AFALAGALIFALALFGNSLVI) traverse the membrane as a helical segment. Over 68 to 81 (YVVTRSKAMRTVTN) the chain is Cytoplasmic. Residues 82–102 (IFICSLALSDLLIAFFCIPVT) traverse the membrane as a helical segment. Residues 103-120 (MLQNISDKWLGGAFICKM) are Extracellular-facing. Residues 121–141 (VPFVQSTAVVTEILTMTCIAV) traverse the membrane as a helical segment. Residues 142 to 162 (ERHQGLIHPFKMKWQYTTRRA) are Cytoplasmic-facing. The chain crosses the membrane as a helical span at residues 163–183 (FTILGVVWLAAIIVGSPMWHV). The Extracellular portion of the chain corresponds to 184–212 (QRLEIKYDFLYEKEHVCCLEEWASPMHQR). Residues 213-233 (IYTTFILVILFLLPLVVMLVL) traverse the membrane as a helical segment. The Cytoplasmic portion of the chain corresponds to 234–271 (YSKIGYELWIKKRVGDSSALQTIHGKEMSKIARKKKRA). Residues 272–292 (VVMMVTVVALFAACWAPFHVV) form a helical membrane-spanning segment. Topologically, residues 293–313 (HMMVEYSNFEKEYDDVTIKMV) are extracellular. A helical transmembrane segment spans residues 314-334 (FAVAQTIGFFNSICNPFVYAF). Residues 335-433 (MNENFKKNFL…NSTFGSGHEL (99 aa)) lie on the Cytoplasmic side of the membrane.

Belongs to the G-protein coupled receptor 1 family. In terms of tissue distribution, expressed widely in the brain with high levels in the cortex and hypothalamus, and moderate levels in the brain stem, caudate nucleus, midbrain hippocampus, thalamus, trigeminal ganglia and spinal cord. Particularly strong expression detected in the mitral cell layer of the olfactory bulb, accessory olfactory bulb, island of Calleja and nucleus of the solitary tract. In peripheral tissues, expressed at moderate levels in the eye, liver, kidney, pituitary gland, testis and thymus.

It is found in the cell membrane. Its function is as follows. Receptor for the orexigenic neuropeptide QRFP. The activity of this receptor is mediated by G proteins that modulate adenylate cyclase activity and intracellular calcium levels. This Mus musculus (Mouse) protein is Pyroglutamylated RF-amide peptide receptor (Qrfpr).